Consider the following 600-residue polypeptide: Chaperone protein DnaK (600 aa).

Threonine 175 carries the phosphothreonine; by autocatalysis modification. Residues 572–600 (FAQQTQQQDPNNQKDDVTEATVTDDSTKK) are disordered. The segment covering 591–600 (ATVTDDSTKK) has biased composition (polar residues).

It belongs to the heat shock protein 70 family.

In terms of biological role, acts as a chaperone. The protein is Chaperone protein DnaK of Ureaplasma urealyticum serovar 10 (strain ATCC 33699 / Western).